The primary structure comprises 870 residues: Protein RRP6-like 2 (870 aa).

The 3'-5' exonuclease domain maps to 263-428 (VQEVKDLKEL…YIYDLIKLEL (166 aa)). The region spanning 479–559 (NAAQLAIVAG…RQSMQHYAAF (81 aa)) is the HRDC domain. 4 disordered regions span residues 583 to 605 (SEKKDLHTGDVASPSLKENSSQL), 649 to 668 (GALLGNAASKKKSRTDEKVK), 688 to 775 (TEKV…EDEP), and 821 to 870 (FGEG…SFKN). 2 stretches are compositionally biased toward basic and acidic residues: residues 720-729 (SKEDGVKELK) and 821-834 (FGEGHKGRQGKREA). Polar residues predominate over residues 840–849 (KGSTQEQSEF).

The protein resides in the nucleus. It localises to the nucleolus. The protein localises to the cytoplasm. Acts as an important epigenetic regulator through multiple silencing mechanisms. Involved in association with RRP6L1 in the silencing of the solo LTR locus. Controls levels of non-coding RNAs (ncRNAs) from the solo LTR locus. Seems to function independently of the RNA-mediated gene silencing (RdDM) pathway. Functions redundantly with RRP6L1 in the regulation of FLC locus. Participates in the maintenance of trimethylated 'Lys-27' (H3K27me3) at FLC locus via the regulation of antisense long non-coding RNAs (lncRNAs) and the regulation of diverse antisense RNAs derived from the FLC locus. Seems not involved in the exosomal RNA degradation. May be involved in poly(A)-mediated RNA degradation. The sequence is that of Protein RRP6-like 2 from Arabidopsis thaliana (Mouse-ear cress).